A 91-amino-acid chain; its full sequence is Acylphosphatase (91 aa).

One can recognise an Acylphosphatase-like domain in the interval 3–91; the sequence is CLRAIVKGKV…ANYSDFRIKH (89 aa). Catalysis depends on residues Arg-18 and Asn-36.

It belongs to the acylphosphatase family.

It catalyses the reaction an acyl phosphate + H2O = a carboxylate + phosphate + H(+). This Dehalococcoides mccartyi (strain CBDB1) protein is Acylphosphatase (acyP).